Reading from the N-terminus, the 194-residue chain is Small ribosomal subunit protein uS7 (194 aa).

The protein belongs to the universal ribosomal protein uS7 family. In terms of assembly, part of the 30S ribosomal subunit.

Functionally, one of the primary rRNA binding proteins, it binds directly to 16S rRNA where it nucleates assembly of the head domain of the 30S subunit. Is located at the subunit interface close to the decoding center. The sequence is that of Small ribosomal subunit protein uS7 from Methanococcus vannielii (strain ATCC 35089 / DSM 1224 / JCM 13029 / OCM 148 / SB).